We begin with the raw amino-acid sequence, 790 residues long: Sodium- and chloride-dependent glycine transporter 2 (790 aa).

Residues 1 to 39 (MDYVNVVDGSKKTMNSPEGAAPGLIGATGITNPTPDNDL) are disordered. Topologically, residues 1 to 192 (MDYVNVVDGS…ARGNWSNKLD (192 aa)) are cytoplasmic. A run of 3 helical transmembrane segments spans residues 193 to 213 (FILS…FPYL), 220 to 240 (GAFL…IFYL), and 264 to 284 (GCGI…NIIM). Positions 199, 201, 202, and 206 each coordinate Na(+). The Extracellular segment spans residues 285-387 (CYTIFYLFAS…GIEYPGEIRW (103 aa)). A disulfide bond links Cys304 and Cys313. N-linked (GlcNAc...) asparagine glycans are attached at residues Asn336, Asn346, Asn351, and Asn357. 3 helical membrane-spanning segments follow: residues 388–408 (PLVF…AKGI), 427–447 (VILL…WWFI), and 463–483 (AATQ…TLSS). Positions 470 and 502 each coordinate Na(+). The next 6 membrane-spanning stretches (helical) occupy residues 504-524 (ATSI…AHIL), 556-576 (WAII…FATI), 597-617 (LFTL…ITQG), 631-651 (SYSL…IYGL), 672-692 (ICWA…SFYQ), and 708-728 (MVMG…MFVI). Residues Leu567 and Asp570 each coordinate Na(+). Over 729-790 (KMFLAPGTFI…PKDFELGTQC (62 aa)) the chain is Cytoplasmic.

The protein belongs to the sodium:neurotransmitter symporter (SNF) (TC 2.A.22) family. SLC6A5 subfamily. As to expression, first expressed in late neurula stages in the anterior spinal cord, where expression intensifies through the tailbud stages, and by hatching, expression is seen in the hindbrain. During late hatching stages, expression extends along most of the length of the spinal cord, mildly intensifies in the hindbrain, and appears in localized regions of the lateral forebrain and medial midbrain. By the swimming tadpole stage, weak expression appears in the anterior hindbrain, with stronger expression in the posterior, postmitotic neurons.

Its subcellular location is the cell membrane. The enzyme catalyses glycine(out) + chloride(out) + 3 Na(+)(out) = glycine(in) + chloride(in) + 3 Na(+)(in). In terms of biological role, sodium- and chloride-dependent glycine transporter. Terminates the action of glycine by its high affinity sodium-dependent reuptake into presynaptic terminals. May be responsible for the termination of neurotransmission at strychnine-sensitive glycinergic synapses. The chain is Sodium- and chloride-dependent glycine transporter 2 from Xenopus laevis (African clawed frog).